The primary structure comprises 241 residues: Regulatory protein VirG (241 aa).

Positions 3–117 (HVLVIDDDVA…EFLARIRVAL (115 aa)) constitute a Response regulatory domain. Asp-52 carries the post-translational modification 4-aspartylphosphate. Positions 129–229 (RRSFYFADWT…ARGAGYFFDA (101 aa)) form a DNA-binding region, ompR/PhoB-type.

Post-translationally, phosphorylated by wide host range (WHR) VirA protein.

It is found in the cytoplasm. Its function is as follows. VirG is required for the positive regulation of at least two vir loci encoded by the Ri plasmid of A.rhizogenes. The sequence is that of Regulatory protein VirG (virG) from Rhizobium rhizogenes (Agrobacterium rhizogenes).